A 441-amino-acid chain; its full sequence is DILAAFRVTPQPGVPPEEAGAAVAAESSTGTWTTVWTDGLTSLDRYKGRCYHIEXVPGEEDQFIAYVAYPLDLFEEGSVTNMLTSIVGNVFGFKALRALRLEDLRIPPAYVKTFQGPPHGIQVERDKLNKYGRPLLRCTIKPKLGLSAKNYGRAVYECLRGGLDFTKDDENVNSQPFMRWRDRFLFCAEAIFKSQAETGEIKGHYLNATAGTCEEMYKRAIFARELGVPIVMHDYLTGGFTANTSLAHYCRDNGLLLHIHXXMHAVIDRQKNHGMHFRVLAKALRMSGGDHIYAGTVVGKLEGERDITLGFVDLLRDDFVEKDRSRGIYFTQDWVSLPGVLAVASGGIHVXHMPALTEIFGDDSVLQFGGGTLGHPWGNAPGAVANRVALEACVQARNEGRDLAVEGNEIIREASKWSPELAAACEVWKEIRFNFKAVDTL.

Substrate contacts are provided by N89 and T139. K141 functions as the Proton acceptor in the catalytic mechanism. K143 is a substrate binding site. Mg(2+) contacts are provided by K167, D169, and E170. K167 bears the N6-carboxylysine mark. Residue H260 is the Proton acceptor of the active site. Residues X261 and S345 each contribute to the substrate site.

It belongs to the RuBisCO large chain family. Type I subfamily. Heterohexadecamer of 8 large chains and 8 small chains; disulfide-linked. The disulfide link is formed within the large subunit homodimers. Mg(2+) serves as cofactor. In terms of processing, the disulfide bond which can form in the large chain dimeric partners within the hexadecamer appears to be associated with oxidative stress and protein turnover.

It is found in the plastid. The protein localises to the chloroplast. The catalysed reaction is 2 (2R)-3-phosphoglycerate + 2 H(+) = D-ribulose 1,5-bisphosphate + CO2 + H2O. The enzyme catalyses D-ribulose 1,5-bisphosphate + O2 = 2-phosphoglycolate + (2R)-3-phosphoglycerate + 2 H(+). RuBisCO catalyzes two reactions: the carboxylation of D-ribulose 1,5-bisphosphate, the primary event in carbon dioxide fixation, as well as the oxidative fragmentation of the pentose substrate in the photorespiration process. Both reactions occur simultaneously and in competition at the same active site. This is Ribulose bisphosphate carboxylase large chain from Asclepias exaltata (Poke milkweed).